The primary structure comprises 251 residues: 4-hydroxy-tetrahydrodipicolinate reductase (251 aa).

Residues G8–M13, G76–T78, and A106–F109 contribute to the NAD(+) site. H136 (proton donor/acceptor) is an active-site residue. A (S)-2,3,4,5-tetrahydrodipicolinate-binding site is contributed by H137. Catalysis depends on K140, which acts as the Proton donor. G146 to T147 provides a ligand contact to (S)-2,3,4,5-tetrahydrodipicolinate.

This sequence belongs to the DapB family.

The protein localises to the cytoplasm. The enzyme catalyses (S)-2,3,4,5-tetrahydrodipicolinate + NAD(+) + H2O = (2S,4S)-4-hydroxy-2,3,4,5-tetrahydrodipicolinate + NADH + H(+). It catalyses the reaction (S)-2,3,4,5-tetrahydrodipicolinate + NADP(+) + H2O = (2S,4S)-4-hydroxy-2,3,4,5-tetrahydrodipicolinate + NADPH + H(+). The protein operates within amino-acid biosynthesis; L-lysine biosynthesis via DAP pathway; (S)-tetrahydrodipicolinate from L-aspartate: step 4/4. In terms of biological role, catalyzes the conversion of 4-hydroxy-tetrahydrodipicolinate (HTPA) to tetrahydrodipicolinate. The protein is 4-hydroxy-tetrahydrodipicolinate reductase of Bifidobacterium longum subsp. infantis (strain ATCC 15697 / DSM 20088 / JCM 1222 / NCTC 11817 / S12).